Reading from the N-terminus, the 226-residue chain is Large ribosomal subunit protein uL1 (226 aa).

Belongs to the universal ribosomal protein uL1 family. Part of the 50S ribosomal subunit.

Its function is as follows. Binds directly to 23S rRNA. The L1 stalk is quite mobile in the ribosome, and is involved in E site tRNA release. In terms of biological role, protein L1 is also a translational repressor protein, it controls the translation of the L11 operon by binding to its mRNA. The polypeptide is Large ribosomal subunit protein uL1 (Borreliella burgdorferi (strain ZS7) (Borrelia burgdorferi)).